An 840-amino-acid polypeptide reads, in one-letter code: Translation initiation factor IF-2 (840 aa).

Residues 1–251 (MTEEKKFSSS…GPAVPATERK (251 aa)) are disordered. Polar residues-rich tracts occupy residues 38–50 (DGTN…TPRS) and 65–83 (NRHT…ASRP). Positions 84–102 (NQSKSQGQGGRNNQRPGSR) are enriched in low complexity. Composition is skewed to basic and acidic residues over residues 110–135 (PMIR…KTDN) and 158–168 (KPAEQSKKAAE). Low complexity predominate over residues 169–207 (KPAQTKPKTAETKTTATTTQSGTGKFGGALASGNNSARN). Basic residues predominate over residues 230 to 239 (GSKKSRRIAA). Residues 341–510 (ARPPVVTIMG…LLQAEVLELK (170 aa)) form the tr-type G domain. Positions 350 to 357 (GHVDHGKT) are G1. 350 to 357 (GHVDHGKT) serves as a coordination point for GTP. Residues 375-379 (GITQH) are G2. The segment at 396–399 (DTPG) is G3. Residues 396 to 400 (DTPGH) and 450 to 453 (NKID) each bind GTP. Residues 450-453 (NKID) form a G4 region. The interval 486-488 (SAK) is G5.

It belongs to the TRAFAC class translation factor GTPase superfamily. Classic translation factor GTPase family. IF-2 subfamily.

Its subcellular location is the cytoplasm. Functionally, one of the essential components for the initiation of protein synthesis. Protects formylmethionyl-tRNA from spontaneous hydrolysis and promotes its binding to the 30S ribosomal subunits. Also involved in the hydrolysis of GTP during the formation of the 70S ribosomal complex. This chain is Translation initiation factor IF-2, found in Leuconostoc citreum (strain KM20).